The following is a 530-amino-acid chain: Na(+)/H(+) antiporter NhaB (530 aa).

13 helical membrane passes run 13–33 (FLGKAPDWYKITIISFLIINP), 34–54 (FVFFLVDPFVAGWLLVVEFIF), 64–84 (PLQPGGLLAIEAVAIGMTSPA), 90–110 (LVANIEVLLLLIFMVAGIYFM), 113–133 (LLLYIFTKILIGIRSKVLLSL), 136–156 (CLMAAFLSAFLDALTVIAVVI), 205–225 (LLMHAGIGTALGGVMTMVGEP), 234–254 (AGWLFGEFIIRMSPVTVPVFM), 306–326 (ALIAVWLIVGLAMHLAAVGLI), 351–371 (EEALPFTALLAVFFSIVAVII), 378–400 (PIISWVLTLNGNAQMTMFYIANG), 450–470 (ATPNGQAAFLFVLTSALAPLI), and 481–501 (ALPYTIVLALVGLAGIEFMLL).

This sequence belongs to the NhaB Na(+)/H(+) (TC 2.A.34) antiporter family.

The protein resides in the cell inner membrane. It catalyses the reaction 2 Na(+)(in) + 3 H(+)(out) = 2 Na(+)(out) + 3 H(+)(in). Its function is as follows. Na(+)/H(+) antiporter that extrudes sodium in exchange for external protons. The sequence is that of Na(+)/H(+) antiporter NhaB from Photobacterium profundum (strain SS9).